A 415-amino-acid chain; its full sequence is Multifunctional CCA protein (415 aa).

ATP contacts are provided by Gly8 and Arg11. CTP is bound by residues Gly8 and Arg11. The Mg(2+) site is built by Glu21 and Asp23. The ATP site is built by Arg91, Arg137, and Arg140. CTP is bound by residues Arg91, Arg137, and Arg140. Residues 226–327 (TGIHTLMTVS…IKLFSAIDVW (102 aa)) form the HD domain.

Belongs to the tRNA nucleotidyltransferase/poly(A) polymerase family. Bacterial CCA-adding enzyme type 1 subfamily. Monomer. Can also form homodimers and oligomers. Mg(2+) serves as cofactor. The cofactor is Ni(2+).

The catalysed reaction is a tRNA precursor + 2 CTP + ATP = a tRNA with a 3' CCA end + 3 diphosphate. The enzyme catalyses a tRNA with a 3' CCA end + 2 CTP + ATP = a tRNA with a 3' CCACCA end + 3 diphosphate. In terms of biological role, catalyzes the addition and repair of the essential 3'-terminal CCA sequence in tRNAs without using a nucleic acid template. Adds these three nucleotides in the order of C, C, and A to the tRNA nucleotide-73, using CTP and ATP as substrates and producing inorganic pyrophosphate. tRNA 3'-terminal CCA addition is required both for tRNA processing and repair. Also involved in tRNA surveillance by mediating tandem CCA addition to generate a CCACCA at the 3' terminus of unstable tRNAs. While stable tRNAs receive only 3'-terminal CCA, unstable tRNAs are marked with CCACCA and rapidly degraded. The sequence is that of Multifunctional CCA protein from Sodalis glossinidius (strain morsitans).